The chain runs to 196 residues: DnaA initiator-associating protein DiaA (196 aa).

The 163-residue stretch at Leu34–Asp196 folds into the SIS domain.

It belongs to the SIS family. DiaA subfamily. Homotetramer; dimer of dimers.

In terms of biological role, required for the timely initiation of chromosomal replication via direct interactions with the DnaA initiator protein. The protein is DnaA initiator-associating protein DiaA of Salmonella enteritidis PT4 (strain P125109).